Consider the following 159-residue polypeptide: Protein SPA, chloroplastic (159 aa).

The N-terminal 47 residues, 1–47 (MLTAPSLSRFKSPFISSPLKLPTLSSSFFTQKFHQTCRRRNSYPCIK), are a transit peptide targeting the chloroplast. A helical transmembrane segment spans residues 56 to 76 (VIAITVGVLSVAIGVGIPVFY). The tract at residues 85-145 (KRENTQPCFP…TCTTCQGSGI (61 aa)) is CR-type-like. CXXCXGXG motif repeat units lie at residues 92 to 99 (CFPCTGTG), 103 to 110 (CRFCMGTG), 126 to 133 (CINCDGAG), and 137 to 144 (CTTCQGSG).

As to expression, expressed in source leaves. Lower levels of expression in fruits and stems.

It is found in the plastid. The protein resides in the chloroplast thylakoid membrane. Its function is as follows. Participates in determining harvest index (HI) by affecting source-sink carbon distribution. Up-regulates the conversion of fixed carbon to exportable sugars. In Solanum lycopersicum (Tomato), this protein is Protein SPA, chloroplastic.